The sequence spans 225 residues: NAD(P)H-quinone oxidoreductase subunit K, chloroplastic (225 aa).

[4Fe-4S] cluster-binding residues include cysteine 43, cysteine 44, cysteine 108, and cysteine 139.

Belongs to the complex I 20 kDa subunit family. As to quaternary structure, NDH is composed of at least 16 different subunits, 5 of which are encoded in the nucleus. [4Fe-4S] cluster is required as a cofactor.

The protein resides in the plastid. Its subcellular location is the chloroplast thylakoid membrane. It catalyses the reaction a plastoquinone + NADH + (n+1) H(+)(in) = a plastoquinol + NAD(+) + n H(+)(out). The catalysed reaction is a plastoquinone + NADPH + (n+1) H(+)(in) = a plastoquinol + NADP(+) + n H(+)(out). NDH shuttles electrons from NAD(P)H:plastoquinone, via FMN and iron-sulfur (Fe-S) centers, to quinones in the photosynthetic chain and possibly in a chloroplast respiratory chain. The immediate electron acceptor for the enzyme in this species is believed to be plastoquinone. Couples the redox reaction to proton translocation, and thus conserves the redox energy in a proton gradient. In Gossypium barbadense (Sea Island cotton), this protein is NAD(P)H-quinone oxidoreductase subunit K, chloroplastic.